We begin with the raw amino-acid sequence, 821 residues long: Cation/H(+) antiporter 15 (821 aa).

Transmembrane regions (helical) follow at residues 37–57 (LPLF…FVFI), 65–82 (RVIS…SVLG), 97–117 (VMVL…LVGV), 131–151 (ALTI…AFSF), 166–186 (ILFL…RILA), 200–220 (MSAA…AIAL), 228–248 (FASL…VFVV), 268–288 (FHIC…DAIG), 292–312 (VFGA…LTLI), 318–338 (FVSG…TNIA), 350–370 (FLVI…VAFF), 378–398 (GITL…VLNV), and 410–430 (FATM…IVTI). Positions 800–821 (DFPESPVHSHETKVTYGLENPR) are disordered.

Belongs to the monovalent cation:proton antiporter 2 (CPA2) transporter (TC 2.A.37) family. CHX (TC 2.A.37.4) subfamily. In terms of tissue distribution, specifically expressed in pollen.

Its subcellular location is the membrane. May operate as a cation/H(+) antiporter. This Arabidopsis thaliana (Mouse-ear cress) protein is Cation/H(+) antiporter 15 (CHX15).